The following is a 447-amino-acid chain: UDP-N-acetylglucosamine 1-carboxyvinyltransferase (447 aa).

Residue 27-28 (KN) participates in phosphoenolpyruvate binding. R97 lines the UDP-N-acetyl-alpha-D-glucosamine pocket. The active-site Proton donor is C121. C121 is modified (2-(S-cysteinyl)pyruvic acid O-phosphothioketal). UDP-N-acetyl-alpha-D-glucosamine is bound by residues 126–130 (RPVDL), D314, and V336.

Belongs to the EPSP synthase family. MurA subfamily.

It localises to the cytoplasm. It catalyses the reaction phosphoenolpyruvate + UDP-N-acetyl-alpha-D-glucosamine = UDP-N-acetyl-3-O-(1-carboxyvinyl)-alpha-D-glucosamine + phosphate. The protein operates within cell wall biogenesis; peptidoglycan biosynthesis. Functionally, cell wall formation. Adds enolpyruvyl to UDP-N-acetylglucosamine. The chain is UDP-N-acetylglucosamine 1-carboxyvinyltransferase from Nostoc sp. (strain PCC 7120 / SAG 25.82 / UTEX 2576).